A 203-amino-acid polypeptide reads, in one-letter code: MQSNIMKIIIIVSLLIVVGTLYVLLSLSTPKKPLAGQVNIYKDNIKIGEAFELIDQNGEIFNSNKLRGHLSLIYFGFTSCPDICPTFLNKMTNIVEILHQNQIDIIPIFITIDPKRDTPEVLKEYIKNFHPKFICLTGNEHQIKDVTDKFKILYARVNGYDDDQNYMIDHSSFTYLIDKNGKYIKHFYLDISAKEIMEFLRNE.

Residues 42–203 (KDNIKIGEAF…KEIMEFLRNE (162 aa)) form the Thioredoxin domain. Residues Cys80, Cys84, and His170 each coordinate Cu cation.

It belongs to the SCO1/2 family.

This Rickettsia typhi (strain ATCC VR-144 / Wilmington) protein is SCO2-like protein RT0576.